The following is a 138-amino-acid chain: uncharacterized protein (138 aa).

It localises to the plastid. Its subcellular location is the chloroplast. This is an uncharacterized protein from Chlorella vulgaris (Green alga).